A 486-amino-acid polypeptide reads, in one-letter code: MTTTKVKTVKNWIDGAWVEASTADTEVVPNPATGEAIAYVPLSGERDVEQAVASAKRAYETWKTVPVPERTRYMFAYLEQLKKNREQLAQLITLENGKTIKDARGEVQRGIECVELATSTPTMMMGDALPDIASGIDGSIWRYPLGVVAGITPFNFPMMVPLWMFPLAIAAGNTFVLKTSERTPLLAEQLVSLMHEVGLPRGVLNLVNGGKAVVNGLLNHPDVEAISFVGSEPVARYVYETGTANGKRVQALAGAKNHAVVLADCELDKTVQGVIGAAFASSGERCMACSVVAVVEEVADAFIEKLTAETKKLTVGNGKNDEHFVGPLIRQSHKDKVVKYIEQGVEQGAELLVDGRNATSEEAGYYLGATLFDHVTPEMTIWQEELFAPVLSIVRVRDLEEAIALTNRSRFANGAVIYTSSGKAAQHFRNAIDAGMVGINVNVPAPMAFFSFAGNKASFFGDLGTNGRDGIQFYTRKKVVTERWFN.

Residues phenylalanine 154, lysine 178, glutamate 181, arginine 182, and serine 231 each contribute to the NAD(+) site. The Nucleophile role is filled by cysteine 286. Glutamate 385 is an NAD(+) binding site.

This sequence belongs to the aldehyde dehydrogenase family. IolA subfamily. As to quaternary structure, homotetramer.

It carries out the reaction 3-oxopropanoate + NAD(+) + CoA + H2O = hydrogencarbonate + acetyl-CoA + NADH + H(+). The enzyme catalyses 2-methyl-3-oxopropanoate + NAD(+) + CoA + H2O = propanoyl-CoA + hydrogencarbonate + NADH + H(+). The protein operates within polyol metabolism; myo-inositol degradation into acetyl-CoA; acetyl-CoA from myo-inositol: step 7/7. In terms of biological role, catalyzes the oxidation of malonate semialdehyde (MSA) and methylmalonate semialdehyde (MMSA) into acetyl-CoA and propanoyl-CoA, respectively. Is involved in a myo-inositol catabolic pathway. Bicarbonate, and not CO2, is the end-product of the enzymatic reaction. This Shouchella clausii (strain KSM-K16) (Alkalihalobacillus clausii) protein is Malonate-semialdehyde dehydrogenase 2.